Consider the following 242-residue polypeptide: Probable transcriptional regulatory protein Cthe_2075 (242 aa).

It belongs to the TACO1 family.

The protein resides in the cytoplasm. This is Probable transcriptional regulatory protein Cthe_2075 from Acetivibrio thermocellus (strain ATCC 27405 / DSM 1237 / JCM 9322 / NBRC 103400 / NCIMB 10682 / NRRL B-4536 / VPI 7372) (Clostridium thermocellum).